Here is a 140-residue protein sequence, read N- to C-terminus: MSSRSIMGFDYGTKSIGVAIGQELTGTAQPLRAIKANDGIPNWDDIDKLLKEWQPDLLVVGLPLNMDGTEQEITVRARKFGNRLHGRFGKQVEFKDERLTTTDARARLFERGGYRALEKGSVDGVSAQLILEAWMEEQYG.

Belongs to the YqgF nuclease family.

It is found in the cytoplasm. Functionally, could be a nuclease involved in processing of the 5'-end of pre-16S rRNA. This chain is Putative pre-16S rRNA nuclease, found in Aeromonas hydrophila subsp. hydrophila (strain ATCC 7966 / DSM 30187 / BCRC 13018 / CCUG 14551 / JCM 1027 / KCTC 2358 / NCIMB 9240 / NCTC 8049).